A 438-amino-acid chain; its full sequence is Proline--tRNA ligase (438 aa).

The protein belongs to the class-II aminoacyl-tRNA synthetase family. ProS type 2 subfamily. In terms of assembly, homodimer.

It localises to the cytoplasm. It catalyses the reaction tRNA(Pro) + L-proline + ATP = L-prolyl-tRNA(Pro) + AMP + diphosphate. In terms of biological role, catalyzes the attachment of proline to tRNA(Pro) in a two-step reaction: proline is first activated by ATP to form Pro-AMP and then transferred to the acceptor end of tRNA(Pro). The protein is Proline--tRNA ligase of Rhodopseudomonas palustris (strain TIE-1).